The primary structure comprises 56 residues: Large ribosomal subunit protein bL32 (56 aa).

A compositionally biased stretch (basic residues) spans Met1–Arg16. The disordered stretch occupies residues Met1–Leu36. Polar residues predominate over residues Ser21 to Gly34.

The protein belongs to the bacterial ribosomal protein bL32 family.

The protein is Large ribosomal subunit protein bL32 of Shewanella sediminis (strain HAW-EB3).